We begin with the raw amino-acid sequence, 402 residues long: Serine/threonine-protein kinase US3 homolog (402 aa).

Disordered regions lie at residues 1–21 and 46–88; these read MSSTPEAETMECGISSSKVHD and FPDS…SPET. A Protein kinase domain is found at 102–386; it reads YNIVSSLPPG…AQDILMLPLF (285 aa). Residues 110 to 118 and K127 each bind ATP; that span reads PGSEGYIYV. D218 acts as the Proton acceptor in catalysis.

It belongs to the protein kinase superfamily. Ser/Thr protein kinase family. In terms of processing, phosphorylated by UL13 homolog; this phosphorylation regulates subsequent phosphorylation of UL31 and UL34 homologs by US3. Autophosphorylated.

The protein resides in the host cytoplasm. The protein localises to the host nucleus. The catalysed reaction is L-seryl-[protein] + ATP = O-phospho-L-seryl-[protein] + ADP + H(+). It carries out the reaction L-threonyl-[protein] + ATP = O-phospho-L-threonyl-[protein] + ADP + H(+). Its function is as follows. Multifunctional serine/threonine kinase that plays a role in several processes including egress of virus particles from the nucleus, modulation of the actin cytoskeleton and inhibition of apoptosis. Phosphorylates UL31 and UL34 homologs, two critical regulators of capsid budding from nucleus to endoplasmic reticulum, thereby facilitating virion egress. Modulates and redistributes host components of the nuclear envelope, including LMNA, emerin/EMD and the nuclear matrix protein MATR3. Phosphorylates envelope glycoprotein B (gB), probably to direct it to the cell surface. Promotes virus intracellular spread by restructuring host cell cytoskeleton. Blocks host apoptosis to extend cell survival and allow efficient viral replication. Promotes viral gene expression by phosphorylating host HDAC2 to reduce viral genome silencing. This is Serine/threonine-protein kinase US3 homolog (US1206) from Gallid herpesvirus 2 (strain GA) (GaHV-2).